Here is a 468-residue protein sequence, read N- to C-terminus: Argininosuccinate lyase (468 aa).

This sequence belongs to the lyase 1 family. Argininosuccinate lyase subfamily.

It localises to the cytoplasm. The enzyme catalyses 2-(N(omega)-L-arginino)succinate = fumarate + L-arginine. The protein operates within amino-acid biosynthesis; L-arginine biosynthesis; L-arginine from L-ornithine and carbamoyl phosphate: step 3/3. The sequence is that of Argininosuccinate lyase from Gloeobacter violaceus (strain ATCC 29082 / PCC 7421).